A 143-amino-acid polypeptide reads, in one-letter code: Transcriptional regulator SlyA (143 aa).

An HTH marR-type domain is found at 2–135 (ESTLGSDLAR…LANLIERLEQ (134 aa)). Positions 49–72 (QIQLAKAIGIEQPSLVRTLDQLED) form a DNA-binding region, H-T-H motif.

This sequence belongs to the SlyA family. Homodimer.

Its function is as follows. Transcription regulator that can specifically activate or repress expression of target genes. The protein is Transcriptional regulator SlyA of Edwardsiella ictaluri (strain 93-146).